The chain runs to 162 residues: Nucleotide-binding protein A2cp1_0112 (162 aa).

The protein belongs to the YajQ family.

Nucleotide-binding protein. This chain is Nucleotide-binding protein A2cp1_0112, found in Anaeromyxobacter dehalogenans (strain 2CP-1 / ATCC BAA-258).